A 294-amino-acid polypeptide reads, in one-letter code: Putative glucose-6-phosphate 1-epimerase (294 aa).

Substrate contacts are provided by arginine 74 and arginine 99. The active site involves histidine 164. Aspartate 208 provides a ligand contact to substrate. Glutamate 267 is a catalytic residue.

Belongs to the glucose-6-phosphate 1-epimerase family. In terms of assembly, monomer in solution.

The catalysed reaction is alpha-D-glucose 6-phosphate = beta-D-glucose 6-phosphate. Its function is as follows. Probably functions as a hexose-6-phosphate 1-epimerase. The protein is Putative glucose-6-phosphate 1-epimerase of Salmonella typhimurium (strain LT2 / SGSC1412 / ATCC 700720).